The sequence spans 331 residues: Phosphoribosylformylglycinamidine cyclo-ligase (331 aa).

The protein belongs to the AIR synthase family.

It is found in the cytoplasm. It carries out the reaction 2-formamido-N(1)-(5-O-phospho-beta-D-ribosyl)acetamidine + ATP = 5-amino-1-(5-phospho-beta-D-ribosyl)imidazole + ADP + phosphate + H(+). It functions in the pathway purine metabolism; IMP biosynthesis via de novo pathway; 5-amino-1-(5-phospho-D-ribosyl)imidazole from N(2)-formyl-N(1)-(5-phospho-D-ribosyl)glycinamide: step 2/2. The polypeptide is Phosphoribosylformylglycinamidine cyclo-ligase (Clostridium botulinum (strain ATCC 19397 / Type A)).